A 737-amino-acid polypeptide reads, in one-letter code: DNA mismatch repair protein MLH1 (737 aa).

2 disordered regions span residues 1–21 and 378–416; these read MIDD…ATTI and TLTS…PAGR. Polar residues predominate over residues 378 to 400; it reads TLTSQKSDSPVSQKPSGQKTQKV.

This sequence belongs to the DNA mismatch repair MutL/HexB family. As to quaternary structure, heterodimer of MLH1 and PMS1, called MutLalpha, which is the major MMR MutL activity correcting base-base mismatches as well as IDLs. The heterodimer binds double strand DNA independently of a mismatch with positive cooperativity and has more than one DNA binding site. Heterodimer of MLH1 and MLH3, called MutLbeta, which is involved in correction of a specific subset of IDLs when associated with MutSbeta. As to expression, ubiquitous.

The protein localises to the nucleus. In terms of biological role, involved in DNA mismatch repair (MMR), correcting insertion-deletion loops (IDLs) resulting from DNA replication, DNA damage or from recombination events between non-identical sequences during meiosis. Component of the MutLbeta heterodimer, which probably forms a ternary complex with the MutSbeta heterodimer that initially recognizes the DNA mismatches. This complex is thought to be responsible for directing the downstream MMR events, including strand discrimination, excision, and resynthesis. Plays a major role in promoting meiotic crossing-over and is involved in maintaining the genetic stability of simple sequence repeats by correction of frameshift intermediates. In Arabidopsis thaliana (Mouse-ear cress), this protein is DNA mismatch repair protein MLH1 (MLH1).